A 173-amino-acid chain; its full sequence is Ribulose bisphosphate carboxylase small subunit, chloroplastic 7 (173 aa).

A chloroplast-targeting transit peptide spans 1–49 (MASIPATVATVAQANMVAPFTGLKSNAAFPVTKKVNDFSTLASNGGRVQ).

Belongs to the RuBisCO small chain family. In terms of assembly, heterohexadecamer of 8 large and 8 small subunits.

It localises to the plastid. The protein resides in the chloroplast. RuBisCO catalyzes two reactions: the carboxylation of D-ribulose 1,5-bisphosphate, the primary event in carbon dioxide fixation, as well as the oxidative fragmentation of the pentose substrate. Both reactions occur simultaneously and in competition at the same active site. Although the small subunit is not catalytic it is essential for maximal activity. The protein is Ribulose bisphosphate carboxylase small subunit, chloroplastic 7 of Flaveria pringlei.